The following is a 1537-amino-acid chain: Flocculation protein FLO1 (1537 aa).

Positions 1-24 (MTMPHRYMFLAVFTLLALTSVASG) are cleaved as a signal peptide. Positions 74 to 249 (GGQTDISIDY…GTTVSDDFEG (176 aa)) constitute a PA14 domain. N-linked (GlcNAc...) asparagine glycans are attached at residues Asn135 and Asn187. Residues 197–240 (GGSLPPNIEGTVYMYAGYYYPMKVVYSNAVSWGTLPISVTLPDG) form a sugar recognition region. Asn262 carries an N-linked (GlcNAc...) asparagine glycan. 18 consecutive repeat copies span residues 278–322 (TTTE…STII), 323–367 (TTTE…TTAI), 368–412 (TTTE…TTAM), 413–457 (TTTQ…TTAM), 458–502 (TTTQ…TTAM), 503–547 (TTTQ…TTAM), 548–592 (TTPQ…TTAI), 593–637 (TTTE…TTAI), 638–682 (TTTQ…TTAM), 683–727 (TTTQ…TTAM), 728–772 (TTTQ…GLIS), 773–817 (TTTE…GLVT), 818–862 (TTTE…GLIS), 863–907 (TTTE…GLIS), 908–952 (TTTE…GLIS), 953–997 (TTTE…GLIS), 998–1042 (TTTE…GLVT), and 1043–1087 (TTTE…ISSS). The segment at 278-1087 (TTTEPWTGTF…KTPTTAISSS (810 aa)) is 18 X 45 AA approximate tandem repeats, Thr-rich. N-linked (GlcNAc...) asparagine glycans are attached at residues Asn329, Asn374, Asn419, Asn464, Asn509, Asn554, Asn599, Asn644, Asn689, and Asn734. 2 disordered regions span residues 770–799 (LIST…NGQP) and 860–889 (LIST…NGQP). Low complexity predominate over residues 773 to 795 (TTTEPWTGTFTSTSTEMTTVTGT). A compositionally biased stretch (low complexity) spans 863 to 885 (TTTEPWTGTFTSTSTEMTTITGT). A disordered region spans residues 995–1024 (LISTTTEPWTGTFTSTSTEMTTVTGTNGQP). Positions 998 to 1020 (TTTEPWTGTFTSTSTEMTTVTGT) are enriched in low complexity. Asn1114 carries N-linked (GlcNAc...) asparagine glycosylation. Tandem repeats lie at residues 1118 to 1137 (VISS…TSSP) and 1138 to 1157 (VISS…IFSE). A 2 X 20 AA approximate tandem repeats, Ser/Thr-rich region spans residues 1118–1157 (VISSSVISSSVTSSLFTSSPVISSSVISSSTTTSTSIFSE). Residues 1161–1220 (SSVIPTSSSTSGSSESETSSAGSVSSSSFISSESSKSPTYSSSSLPLVTSATTSQETASS) are compositionally biased toward low complexity. Residues 1161–1232 (SSVIPTSSST…PATTTKTSEQ (72 aa)) are disordered. The span at 1222–1232 (PPATTTKTSEQ) shows a compositional bias: polar residues. Repeat copies occupy residues 1226–1276 (TTKT…CPIS), 1291–1341 (TTET…CPIS), 1342–1392 (TTES…RPQT), 1408–1416 (ETTTNTLAA), 1417–1425 (ETTTNTVAA), and 1426–1434 (ETITNTGAA). The interval 1226-1392 (TTKTSEQTTL…TVYPTWRPQT (167 aa)) is 3 X 51 AA approximate repeats, Ser/Thr-rich. Polar residues predominate over residues 1392–1404 (TANEESVSSKMNS). Residues 1392–1414 (TANEESVSSKMNSATGETTTNTL) form a disordered region. Residues 1405–1414 (ATGETTTNTL) show a composition bias toward low complexity. The 3 X 9 AA approximate tandem repeats, Thr-rich stretch occupies residues 1408–1434 (ETTTNTLAAETTTNTVAAETITNTGAA). The tract at residues 1468–1497 (VSVSETGNTKSLTSSGLSTMSQQPRSTPAS) is disordered. Polar residues predominate over residues 1472-1497 (ETGNTKSLTSSGLSTMSQQPRSTPAS). Gly1514 carries GPI-anchor amidated glycine lipidation. A propeptide spans 1515-1537 (SANSLLAGSGLSVFIASLLLAII) (removed in mature form).

Belongs to the flocculin family. Post-translationally, extensively N- and O-glycosylated. In terms of processing, the GPI-anchor is attached to the protein in the endoplasmic reticulum and serves to target the protein to the cell surface. There, the glucosamine-inositol phospholipid moiety is cleaved off and the GPI-modified mannoprotein is covalently attached via its lipidless GPI glycan remnant to the 1,6-beta-glucan of the outer cell wall layer.

It is found in the cell membrane. Its subcellular location is the secreted. It localises to the cell wall. Its function is as follows. Cell wall protein that participates directly in adhesive cell-cell interactions during yeast flocculation, a reversible, asexual and Ca(2+)-dependent process in which cells adhere to form aggregates (flocs) consisting of thousands of cells. The lectin-like protein sticks out of the cell wall of flocculent cells and selectively binds mannose residues in the cell walls of adjacent cells. Activity is inhibited by mannose, but not by glucose, maltose, sucrose or galactose. Also involved in cell-substrate adhesion. This is Flocculation protein FLO1 (FLO1) from Saccharomyces cerevisiae (strain ATCC 204508 / S288c) (Baker's yeast).